The following is a 714-amino-acid chain: Interferon-induced GTP-binding protein Mx2 (714 aa).

The tract at residues Met-1 to Leu-89 is disordered. Composition is skewed to polar residues over residues Asn-61–Pro-70 and Gln-79–Asn-88. In terms of domain architecture, Dynamin-type G spans Asp-115–Pro-386. The tract at residues Gly-125 to Ser-132 is G1 motif. Gly-125–Ser-132 is a GTP binding site. The segment at Ile-150–Arg-152 is G2 motif. A G3 motif region spans residues Asp-224 to Gly-227. Residues Asp-224–Ile-228 and Thr-293–Asp-296 contribute to the GTP site. Residues Thr-293–Asp-296 form a G4 motif region. Positions Lys-325–Gly-328 are G5 motif. Residues Ile-622–Ser-713 enclose the GED domain.

This sequence belongs to the TRAFAC class dynamin-like GTPase superfamily. Dynamin/Fzo/YdjA family.

Its subcellular location is the cytoplasm. It localises to the nucleus. Functionally, interferon-induced dynamin-like GTPase with antiviral activity. The sequence is that of Interferon-induced GTP-binding protein Mx2 (MX2) from Ovis aries (Sheep).